The sequence spans 341 residues: ATPase GET3 (341 aa).

ATP is bound at residue 34–41 (KGGVGKTT). D63 is an active-site residue. Residues E245 and N272 each coordinate ATP. Residues C283 and C286 each contribute to the Zn(2+) site.

This sequence belongs to the arsA ATPase family. As to quaternary structure, homodimer.

Its subcellular location is the cytoplasm. It localises to the endoplasmic reticulum. Its function is as follows. ATPase required for the post-translational delivery of tail-anchored (TA) proteins to the endoplasmic reticulum. Recognizes and selectively binds the transmembrane domain of TA proteins in the cytosol. This complex then targets to the endoplasmic reticulum by membrane-bound receptors, where the tail-anchored protein is released for insertion. This process is regulated by ATP binding and hydrolysis. ATP binding drives the homodimer towards the closed dimer state, facilitating recognition of newly synthesized TA membrane proteins. ATP hydrolysis is required for insertion. Subsequently, the homodimer reverts towards the open dimer state, lowering its affinity for the membrane-bound receptor, and returning it to the cytosol to initiate a new round of targeting. The polypeptide is ATPase GET3 (Ajellomyces capsulatus (strain G186AR / H82 / ATCC MYA-2454 / RMSCC 2432) (Darling's disease fungus)).